The chain runs to 31 residues: Photosystem II reaction center protein Psb30 (31 aa).

Residues 5–25 traverse the membrane as a helical segment; the sequence is IQLTSLLLIVIAGPLVIALLF.

Belongs to the Psb30/Ycf12 family. PSII is composed of 1 copy each of membrane proteins PsbA, PsbB, PsbC, PsbD, PsbE, PsbF, PsbH, PsbI, PsbJ, PsbK, PsbL, PsbM, PsbT, PsbX, PsbY, PsbZ, Psb30/Ycf12, peripheral proteins of the oxygen-evolving complex and a large number of cofactors. It forms dimeric complexes.

It is found in the plastid. It localises to the chloroplast thylakoid membrane. A core subunit of photosystem II (PSII), probably helps stabilize the reaction center. The chain is Photosystem II reaction center protein Psb30 from Phacus acuminatus.